Here is a 345-residue protein sequence, read N- to C-terminus: Anthranilate phosphoribosyltransferase (345 aa).

5-phospho-alpha-D-ribose 1-diphosphate-binding positions include glycine 79, 82-83 (GD), threonine 87, 89-92 (NVST), 106-114 (KHGNRAVSG), and serine 118. Glycine 79 serves as a coordination point for anthranilate. Serine 91 provides a ligand contact to Mg(2+). Anthranilate is bound at residue asparagine 109. Arginine 164 contacts anthranilate. Mg(2+) contacts are provided by aspartate 223 and glutamate 224.

Belongs to the anthranilate phosphoribosyltransferase family. In terms of assembly, homodimer. It depends on Mg(2+) as a cofactor.

It carries out the reaction N-(5-phospho-beta-D-ribosyl)anthranilate + diphosphate = 5-phospho-alpha-D-ribose 1-diphosphate + anthranilate. It functions in the pathway amino-acid biosynthesis; L-tryptophan biosynthesis; L-tryptophan from chorismate: step 2/5. In terms of biological role, catalyzes the transfer of the phosphoribosyl group of 5-phosphorylribose-1-pyrophosphate (PRPP) to anthranilate to yield N-(5'-phosphoribosyl)-anthranilate (PRA). The polypeptide is Anthranilate phosphoribosyltransferase (Saccharolobus islandicus (strain L.S.2.15 / Lassen #1) (Sulfolobus islandicus)).